Consider the following 175-residue polypeptide: Alkyl hydroperoxide reductase AhpD (175 aa).

Cys131 serves as the catalytic Proton donor. Residues Cys131 and Cys134 are joined by a disulfide bond. Cys134 serves as the catalytic Cysteine sulfenic acid (-SOH) intermediate.

It belongs to the AhpD family.

The catalysed reaction is N(6)-[(R)-dihydrolipoyl]-L-lysyl-[lipoyl-carrier protein] + a hydroperoxide = N(6)-[(R)-lipoyl]-L-lysyl-[lipoyl-carrier protein] + an alcohol + H2O. In terms of biological role, antioxidant protein with alkyl hydroperoxidase activity. Required for the reduction of the AhpC active site cysteine residues and for the regeneration of the AhpC enzyme activity. In Brucella abortus (strain 2308), this protein is Alkyl hydroperoxide reductase AhpD.